Here is a 1012-residue protein sequence, read N- to C-terminus: Autotransporter adhesin BpaC (1012 aa).

An N-terminal signal peptide occupies residues 1–71; that stretch reads MNRIFKSIWC…PFAEEAMAAN (71 aa). The interval 72–921 is surface exposed passenger domain; the sequence is NAGVCLTYNG…VGQLNSAVSG (850 aa). Disordered stretches follow at residues 420–746 and 785–809; these read GLQG…AGAT and ENSTANGANSTASGNGSSAFGESAA. Positions 427 to 442 are enriched in polar residues; it reads ANTGTASGDNSTASGD. Positions 443–504 are enriched in low complexity; that stretch reads NATASGTNST…ANGTNSTASG (62 aa). Residues 505–519 show a composition bias toward polar residues; the sequence is DNSTASGTNASATGE. Residues 520–588 are compositionally biased toward low complexity; sequence NSTATGTDST…ANGTNSTASG (69 aa). Positions 589–603 are enriched in polar residues; it reads DNSTASGTNASATGE. The span at 604–630 shows a compositional bias: low complexity; sequence NSTATGTDSTASGSNSTANGTNSTASG. The span at 631–645 shows a compositional bias: polar residues; the sequence is DNSTASGTNASATGE. Composition is skewed to low complexity over residues 646–700 and 708–746; these read NSTA…TASG and TNASATGENSTATGTASTASGSNSTANGANSTASGAGAT. An outer membrane translocation of the passenger domain region spans residues 922-959; sequence IRNQMDGMQGQIDTLARDAYSGIAAATALTMIPDVDPG. The segment at 960-1012 is translocator domain; sequence KTLAVGIGTANFKGYQASALGATARITQNLKVKTGVSYSGSNYVWGAGMSYQW.

It belongs to the autotransporter-2 (AT-2) (TC 1.B.40) family. Homotrimer.

The protein localises to the cell surface. The protein resides in the cell outer membrane. Its function is as follows. Involved in virulence. Mediates adherence to human respiratory epithelial cells. This chain is Autotransporter adhesin BpaC, found in Burkholderia mallei (strain ATCC 23344).